A 317-amino-acid polypeptide reads, in one-letter code: Endochitinase 3 (317 aa).

Positions 1–19 (MFVRNALVVTGLLAALTQA) are cleaved as a signal peptide. Residues N25, N49, and N169 are each glycosylated (N-linked (GlcNAc...) asparagine). The GH18 domain maps to 29 to 317 (HKLTVYWGAE…NYQKEIKANL (289 aa)). Residue E170 is the Proton donor of the active site. N245 is a glycosylation site (N-linked (GlcNAc...) asparagine).

It belongs to the glycosyl hydrolase 18 family. Chitinase class III subfamily.

It is found in the secreted. It carries out the reaction Random endo-hydrolysis of N-acetyl-beta-D-glucosaminide (1-&gt;4)-beta-linkages in chitin and chitodextrins.. Its function is as follows. Secreted chitinase involved in the degradation of chitin, a component of the cell walls of fungi and exoskeletal elements of some animals (including worms and arthropods). Participates in the infection process and directly acts in the penetration process of the host cuticle. Involved in heat-shock adaptation. This Metarhizium robertsii (strain ARSEF 23 / ATCC MYA-3075) (Metarhizium anisopliae (strain ARSEF 23)) protein is Endochitinase 3 (chi3).